A 326-amino-acid chain; its full sequence is Malate dehydrogenase (326 aa).

12-18 serves as a coordination point for NAD(+); the sequence is GGTGQIA. Arg-93 and Arg-99 together coordinate substrate. NAD(+) contacts are provided by residues Asn-106, Gln-113, and 130–132; that span reads VGN. Substrate contacts are provided by Asn-132 and Arg-163. The active-site Proton acceptor is the His-188.

It belongs to the LDH/MDH superfamily. MDH type 2 family.

It catalyses the reaction (S)-malate + NAD(+) = oxaloacetate + NADH + H(+). In terms of biological role, catalyzes the reversible oxidation of malate to oxaloacetate. The polypeptide is Malate dehydrogenase (Chlamydia trachomatis serovar L2 (strain ATCC VR-902B / DSM 19102 / 434/Bu)).